A 382-amino-acid chain; its full sequence is Succinate--CoA ligase [ADP-forming] subunit beta (382 aa).

Positions 9-240 constitute an ATP-grasp domain; it reads KELFLRYGVK…PRDITEFEAY (232 aa). Residues K45, 52-54, V94, and E99 each bind ATP; that span reads GRG. 2 residues coordinate Mg(2+): N193 and D207. Residues N260 and 317-319 contribute to the substrate site; that span reads GIT.

Belongs to the succinate/malate CoA ligase beta subunit family. As to quaternary structure, heterotetramer of two alpha and two beta subunits. It depends on Mg(2+) as a cofactor.

The enzyme catalyses succinate + ATP + CoA = succinyl-CoA + ADP + phosphate. It catalyses the reaction GTP + succinate + CoA = succinyl-CoA + GDP + phosphate. Its pathway is carbohydrate metabolism; tricarboxylic acid cycle; succinate from succinyl-CoA (ligase route): step 1/1. Functionally, succinyl-CoA synthetase functions in the citric acid cycle (TCA), coupling the hydrolysis of succinyl-CoA to the synthesis of either ATP or GTP and thus represents the only step of substrate-level phosphorylation in the TCA. The beta subunit provides nucleotide specificity of the enzyme and binds the substrate succinate, while the binding sites for coenzyme A and phosphate are found in the alpha subunit. The chain is Succinate--CoA ligase [ADP-forming] subunit beta from Pyrobaculum islandicum (strain DSM 4184 / JCM 9189 / GEO3).